The primary structure comprises 816 residues: Cation/H(+) antiporter 8 (816 aa).

The next 12 membrane-spanning stretches (helical) occupy residues 64–84 (PKLE…NILF), 97–117 (MMLA…NSII), 127–147 (IDVA…LKGV), 163–183 (VTGV…FNLK), 197–214 (VMLL…ARLL), 227–247 (VALS…IANV), 255–275 (ADGL…FAVV), 297–317 (IHGV…LSQF), 343–363 (LESF…MLRT), 382–402 (FAVA…SVIV), 413–433 (SIIL…FYLF), and 447–467 (ILVL…GFLY).

Belongs to the monovalent cation:proton antiporter 2 (CPA2) transporter (TC 2.A.37) family. CHX (TC 2.A.37.4) subfamily. In terms of tissue distribution, specifically expressed in pollen.

Its subcellular location is the membrane. In terms of biological role, may operate as a cation/H(+) antiporter. This chain is Cation/H(+) antiporter 8 (CHX8), found in Arabidopsis thaliana (Mouse-ear cress).